The following is a 253-amino-acid chain: N-acetylglucosaminyl-phosphatidylinositol de-N-acetylase (253 aa).

A helical membrane pass occupies residues 3–23 (VAAPLLCLAAAVLVWGVLWVW). The Cytoplasmic segment spans residues 24-253 (GSWERMTRPE…YMRINSLNFL (230 aa)).

It belongs to the PIGL family.

It is found in the endoplasmic reticulum membrane. The catalysed reaction is a 6-(N-acetyl-alpha-D-glucosaminyl)-1-(1,2-diacyl-sn-glycero-3-phospho)-1D-myo-inositol + H2O = a 6-(alpha-D-glucosaminyl)-1-(1,2-diacyl-sn-glycero-3-phospho)-1D-myo-inositol + acetate. It participates in glycolipid biosynthesis; glycosylphosphatidylinositol-anchor biosynthesis. Its function is as follows. Catalyzes the second step of glycosylphosphatidylinositol (GPI) biosynthesis, which is the de-N-acetylation of N-acetylglucosaminyl-phosphatidylinositol. The chain is N-acetylglucosaminyl-phosphatidylinositol de-N-acetylase (PIGL) from Bos taurus (Bovine).